A 257-amino-acid chain; its full sequence is Zinc transporter ZupT (257 aa).

The next 3 membrane-spanning stretches (helical) occupy residues 5–25 (LILT…GVLG), 32–52 (VLAF…LMEM), and 61–81 (GMSP…YFGL). Fe(2+)-binding residues include asparagine 120 and glutamate 123. Zn(2+) contacts are provided by glutamate 123 and histidine 148. Residues asparagine 149, glutamate 152, and glutamate 181 each coordinate Fe(2+). Glutamate 152 serves as a coordination point for Zn(2+). 3 consecutive transmembrane segments (helical) span residues 182–202 (IFGG…IVMA), 203–223 (AIMA…LMPL), and 236–256 (GVLC…TIGI).

Belongs to the ZIP transporter (TC 2.A.5) family. ZupT subfamily.

The protein localises to the cell inner membrane. The catalysed reaction is Zn(2+)(in) = Zn(2+)(out). Functionally, mediates zinc uptake. May also transport other divalent cations. This Salmonella arizonae (strain ATCC BAA-731 / CDC346-86 / RSK2980) protein is Zinc transporter ZupT.